The primary structure comprises 101 residues: Apolipoprotein C-II (101 aa).

The first 22 residues, 1-22 (MGARHLLALLLVLLVLGFEVQG), serve as a signal peptide directing secretion. Residues 66–74 (TMDEKIRDM) are lipid binding. Positions 78 to 101 (STAAVSTYVGIFTDQLLSLLKGED) are lipoprotein lipase cofactor.

This sequence belongs to the apolipoprotein C2 family. Proapolipoprotein C-II is synthesized as a sialic acid containing glycoprotein which is subsequently desialylated prior to its proteolytic processing. In terms of processing, proapolipoprotein C-II, the major form found in plasma undergoes proteolytic cleavage of its N-terminal hexapeptide to generate apolipoprotein C-II, which occurs as the minor form in plasma.

It localises to the secreted. Functionally, component of chylomicrons, very low-density lipoproteins (VLDL), low-density lipoproteins (LDL), and high-density lipoproteins (HDL) in plasma. Plays an important role in lipoprotein metabolism as an activator of lipoprotein lipase. Both proapolipoprotein C-II and apolipoprotein C-II can activate lipoprotein lipase. The sequence is that of Apolipoprotein C-II (APOC2) from Tapirus terrestris (Lowland tapir).